The chain runs to 194 residues: Transmembrane protein 212 (194 aa).

5 helical membrane passes run 11 to 31, 44 to 64, 76 to 96, 99 to 119, and 148 to 168; these read ILVT…FPVF, IACP…LLLA, ATFT…AIAL, ALLG…NYLG, and LQAL…TVFI.

Its subcellular location is the membrane. This is Transmembrane protein 212 (TMEM212) from Homo sapiens (Human).